A 613-amino-acid polypeptide reads, in one-letter code: Chitin synthase 8 (613 aa).

The interval methionine 1 to proline 73 is disordered. N-linked (GlcNAc...) asparagine glycosylation occurs at asparagine 17. The segment covering leucine 18 to threonine 27 has biased composition (polar residues). The span at glutamate 61–proline 73 shows a compositional bias: pro residues. The next 2 membrane-spanning stretches (helical) occupy residues tyrosine 119–tyrosine 139 and tyrosine 142–isoleucine 162. N-linked (GlcNAc...) asparagine glycans are attached at residues asparagine 312, asparagine 421, and asparagine 471. 2 consecutive transmembrane segments (helical) span residues valine 556–leucine 576 and isoleucine 583–alanine 602.

It belongs to the chitin synthase family.

It localises to the cell membrane. It catalyses the reaction [(1-&gt;4)-N-acetyl-beta-D-glucosaminyl](n) + UDP-N-acetyl-alpha-D-glucosamine = [(1-&gt;4)-N-acetyl-beta-D-glucosaminyl](n+1) + UDP + H(+). Polymerizes chitin, a structural polymer of the cell wall and septum, by transferring the sugar moiety of UDP-GlcNAc to the non-reducing end of the growing chitin polymer. Plays a role in cell wall integrity. Plays a key role in pathogenicity. Likely contributes to post-penetration virulence. The chain is Chitin synthase 8 from Verticillium dahliae (strain VdLs.17 / ATCC MYA-4575 / FGSC 10137) (Verticillium wilt).